Here is a 65-residue protein sequence, read N- to C-terminus: GVRDAYIADDKNCVYTCGSNSYCNTECTKNGAESGYCQWLGKYGNACWCIKLPDKVPIRIPGKCR.

An LCN-type CS-alpha/beta domain is found at 3–65; sequence RDAYIADDKN…VPIRIPGKCR (63 aa). Residues 9 to 13 form a specificity module, loop 1 region; that stretch reads DDKNC. 4 disulfide bridges follow: Cys13-Cys64, Cys17-Cys37, Cys23-Cys47, and Cys27-Cys49. Specificity module, loop stretches follow at residues 40–44 and 57–65; these read LGKYG and PIRIPGKCR. Position 65 is an arginine amide (Arg65).

This sequence belongs to the long (4 C-C) scorpion toxin superfamily. Sodium channel inhibitor family. Alpha subfamily. In terms of processing, the recombinant toxin which is used for activity tests is not amidated. However, C-terminal amidation does not appear to play an important role in activity, since the non-amidated recombinant toxin and the native toxin (which is amidated) show similar activities on all sodium channels tested. As to expression, expressed by the venom gland.

The protein resides in the secreted. Functionally, alpha toxins bind voltage-independently at site-3 of sodium channels (Nav) and inhibit the inactivation of the activated channels, thereby blocking neuronal transmission. Both native and recombinant (non-amidated) toxins inhibit inactivation of Nav1.2/SCN2A (EC(50)=31.2-36.6 nM), Nav1.6/SCN8A (EC(50)=6.9-8.9 nM), and Nav1.7/SCN9A (EC(50)=182.0-260.1 nM). The chain is Alpha-toxin Lqq4 from Leiurus quinquestriatus quinquestriatus (Egyptian scorpion).